Here is a 256-residue protein sequence, read N- to C-terminus: Triosephosphate isomerase (256 aa).

Position 9–11 (9–11 (NWK)) interacts with substrate. Histidine 97 functions as the Electrophile in the catalytic mechanism. Glutamate 169 (proton acceptor) is an active-site residue. Substrate is bound by residues glycine 175, serine 214, and 235 to 236 (GG).

The protein belongs to the triosephosphate isomerase family. Homodimer.

Its subcellular location is the cytoplasm. The enzyme catalyses D-glyceraldehyde 3-phosphate = dihydroxyacetone phosphate. Its pathway is carbohydrate biosynthesis; gluconeogenesis. It participates in carbohydrate degradation; glycolysis; D-glyceraldehyde 3-phosphate from glycerone phosphate: step 1/1. Involved in the gluconeogenesis. Catalyzes stereospecifically the conversion of dihydroxyacetone phosphate (DHAP) to D-glyceraldehyde-3-phosphate (G3P). This is Triosephosphate isomerase from Aliivibrio salmonicida (strain LFI1238) (Vibrio salmonicida (strain LFI1238)).